We begin with the raw amino-acid sequence, 425 residues long: uncharacterized protein (425 aa).

Transmembrane regions (helical) follow at residues 15–35 (LICA…SQML), 48–68 (LIGA…WAPL), 84–104 (MLLS…FDPL), 107–127 (LGTV…QDIV), 149–169 (INAY…LAAI), 174–194 (TVFL…LFLA), 225–245 (VIQA…DSFA), 271–291 (ALWS…KLGI), 295–315 (LWLF…LAAF), 331–351 (VVIA…VAFM), 370–390 (LSAL…GAVG), and 395–415 (FWFC…VAPL).

To E.coli AmpG and yeast YBR220c.

Its subcellular location is the cell inner membrane. This is an uncharacterized protein from Haemophilus influenzae (strain ATCC 51907 / DSM 11121 / KW20 / Rd).